We begin with the raw amino-acid sequence, 85 residues long: Large ribosomal subunit protein bL27 (85 aa).

Belongs to the bacterial ribosomal protein bL27 family.

In Stutzerimonas stutzeri (strain A1501) (Pseudomonas stutzeri), this protein is Large ribosomal subunit protein bL27.